A 245-amino-acid polypeptide reads, in one-letter code: MNATHILESHEANEQHHATNRSYWEVTYNILVIMSIVFSMATYLILDKDRFEKNPLLRFAIILLPLSCSAIQYLFLLYTNWKSNYEPEGTLHKALYYFFNVLLIAFAIISILSIIVLPINGWGNESDIAIYSVILPFFVVWSVDLVSTINDLTMETVHLIDTHYTMLFDLMMIITIIVNPKYSSQGYRYRQSPTPSSSRSTSSRTTKMRIVLLIIMLILAISMYAFIAWKCLTFLRNMQGKKWCN.

The protein belongs to the UPF0328 family.

In Encephalitozoon cuniculi (strain GB-M1) (Microsporidian parasite), this protein is UPF0328 protein ECU09_2010.